Consider the following 514-residue polypeptide: Exoglucanase 1 (514 aa).

The N-terminal stretch at 1–17 is a signal peptide; it reads MYQKLALISAFLATARA. Residues 18–453 are catalytic; sequence QSACTLQAET…GSTGNSSGGN (436 aa). 10 disulfides stabilise this stretch: Cys21-Cys89, Cys36-Cys42, Cys67-Cys88, Cys78-Cys84, Cys155-Cys414, Cys189-Cys227, Cys193-Cys226, Cys247-Cys273, Cys255-Cys260, and Cys278-Cys348. N-linked (GlcNAc...) asparagine glycans are attached at residues Asn62 and Asn81. Catalysis depends on Glu229, which acts as the Nucleophile. The Proton donor role is filled by Glu234. Residue Asn287 is glycosylated (N-linked (GlcNAc...) asparagine). Disordered stretches follow at residues 401 to 427 and 444 to 481; these read NETSSTPGAVRGSCSTSSGVPAQLESN and GSTGNSSGGNPPGGNPPGTTTTRRPATSTGSSPGPTQT. Positions 454-478 are linker; that stretch reads PPGGNPPGTTTTRRPATSTGSSPGP. The segment covering 460–479 has biased composition (low complexity); that stretch reads PGTTTTRRPATSTGSSPGPT. Residues 478-514 enclose the CBM1 domain; the sequence is PTQTHYGQCGGIGYSGPTVCASGSTCQVLNPYYSQCL. Disulfide bonds link Cys486–Cys503 and Cys497–Cys513.

Belongs to the glycosyl hydrolase 7 (cellulase C) family.

It catalyses the reaction Hydrolysis of (1-&gt;4)-beta-D-glucosidic linkages in cellulose and cellotetraose, releasing cellobiose from the non-reducing ends of the chains.. Functionally, the biological conversion of cellulose to glucose generally requires three types of hydrolytic enzymes: (1) Endoglucanases which cut internal beta-1,4-glucosidic bonds; (2) Exocellobiohydrolases that cut the disaccharide cellobiose from the non-reducing end of the cellulose polymer chain; (3) Beta-1,4-glucosidases which hydrolyze the cellobiose and other short cello-oligosaccharides to glucose. In Hypocrea rufa (Trichoderma viride), this protein is Exoglucanase 1 (cbh1).